Here is a 158-residue protein sequence, read N- to C-terminus: Cyclic pyranopterin monophosphate synthase (158 aa).

Residues 75–77 (LCH) and 113–114 (ME) contribute to the substrate site. Asp128 is a catalytic residue.

Belongs to the MoaC family. As to quaternary structure, homohexamer; trimer of dimers.

It catalyses the reaction (8S)-3',8-cyclo-7,8-dihydroguanosine 5'-triphosphate = cyclic pyranopterin phosphate + diphosphate. Its pathway is cofactor biosynthesis; molybdopterin biosynthesis. Functionally, catalyzes the conversion of (8S)-3',8-cyclo-7,8-dihydroguanosine 5'-triphosphate to cyclic pyranopterin monophosphate (cPMP). This chain is Cyclic pyranopterin monophosphate synthase, found in Polynucleobacter asymbioticus (strain DSM 18221 / CIP 109841 / QLW-P1DMWA-1) (Polynucleobacter necessarius subsp. asymbioticus).